A 120-amino-acid chain; its full sequence is MKMAVLVRTDLDMGKGKIAAQVAHAAVSLVLEIVQKRSKAEWKEWLEMWINQGQPKIVLKVKNLDELLEKYNKALQSGLPATIIQDAGKTQIEPGTITCAGIGPGPEEMIDNITGDLKLL.

The protein belongs to the PTH2 family.

It localises to the cytoplasm. It catalyses the reaction an N-acyl-L-alpha-aminoacyl-tRNA + H2O = an N-acyl-L-amino acid + a tRNA + H(+). In terms of biological role, the natural substrate for this enzyme may be peptidyl-tRNAs which drop off the ribosome during protein synthesis. This Sulfolobus acidocaldarius (strain ATCC 33909 / DSM 639 / JCM 8929 / NBRC 15157 / NCIMB 11770) protein is Peptidyl-tRNA hydrolase.